The chain runs to 170 residues: MTSSPIRILGIDPGLRRTGWGVLDIEGNRLMFVGCGSVETREQMALASRLLAIHEGLGRVLDEFRPAEAAIEQTFVNKDGVATLKLGQARGVAMLAPAMFGIVVAEYAPNQVKKTVVGAGHADKTQIQAMLKILLPKADPKSADAADALAIAITHAHHRGAAALRMKVAG.

Residues Asp-12, Glu-72, and Asp-144 contribute to the active site. Residues Asp-12, Glu-72, and Asp-144 each contribute to the Mg(2+) site.

Belongs to the RuvC family. In terms of assembly, homodimer which binds Holliday junction (HJ) DNA. The HJ becomes 2-fold symmetrical on binding to RuvC with unstacked arms; it has a different conformation from HJ DNA in complex with RuvA. In the full resolvosome a probable DNA-RuvA(4)-RuvB(12)-RuvC(2) complex forms which resolves the HJ. The cofactor is Mg(2+).

It localises to the cytoplasm. The enzyme catalyses Endonucleolytic cleavage at a junction such as a reciprocal single-stranded crossover between two homologous DNA duplexes (Holliday junction).. The RuvA-RuvB-RuvC complex processes Holliday junction (HJ) DNA during genetic recombination and DNA repair. Endonuclease that resolves HJ intermediates. Cleaves cruciform DNA by making single-stranded nicks across the HJ at symmetrical positions within the homologous arms, yielding a 5'-phosphate and a 3'-hydroxyl group; requires a central core of homology in the junction. The consensus cleavage sequence is 5'-(A/T)TT(C/G)-3'. Cleavage occurs on the 3'-side of the TT dinucleotide at the point of strand exchange. HJ branch migration catalyzed by RuvA-RuvB allows RuvC to scan DNA until it finds its consensus sequence, where it cleaves and resolves the cruciform DNA. The sequence is that of Crossover junction endodeoxyribonuclease RuvC from Nitrobacter hamburgensis (strain DSM 10229 / NCIMB 13809 / X14).